Reading from the N-terminus, the 502-residue chain is ATP synthase subunit alpha 1/3 (502 aa).

169–176 (GDRQTGKT) is an ATP binding site.

This sequence belongs to the ATPase alpha/beta chains family. In terms of assembly, F-type ATPases have 2 components, CF(1) - the catalytic core - and CF(0) - the membrane proton channel. CF(1) has five subunits: alpha(3), beta(3), gamma(1), delta(1), epsilon(1). CF(0) has three main subunits: a(1), b(2) and c(9-12). The alpha and beta chains form an alternating ring which encloses part of the gamma chain. CF(1) is attached to CF(0) by a central stalk formed by the gamma and epsilon chains, while a peripheral stalk is formed by the delta and b chains.

Its subcellular location is the cell inner membrane. The catalysed reaction is ATP + H2O + 4 H(+)(in) = ADP + phosphate + 5 H(+)(out). Functionally, produces ATP from ADP in the presence of a proton gradient across the membrane. The alpha chain is a regulatory subunit. This is ATP synthase subunit alpha 1/3 from Syntrophotalea carbinolica (strain DSM 2380 / NBRC 103641 / GraBd1) (Pelobacter carbinolicus).